The chain runs to 248 residues: Probable transcriptional regulatory protein Msil_2305 (248 aa).

It belongs to the TACO1 family.

The protein resides in the cytoplasm. The protein is Probable transcriptional regulatory protein Msil_2305 of Methylocella silvestris (strain DSM 15510 / CIP 108128 / LMG 27833 / NCIMB 13906 / BL2).